Reading from the N-terminus, the 234-residue chain is Large ribosomal subunit protein uL1 (234 aa).

This sequence belongs to the universal ribosomal protein uL1 family. As to quaternary structure, part of the 50S ribosomal subunit.

Its function is as follows. Binds directly to 23S rRNA. The L1 stalk is quite mobile in the ribosome, and is involved in E site tRNA release. Functionally, protein L1 is also a translational repressor protein, it controls the translation of the L11 operon by binding to its mRNA. The sequence is that of Large ribosomal subunit protein uL1 from Campylobacter fetus subsp. fetus (strain 82-40).